The chain runs to 500 residues: Aspartyl/glutamyl-tRNA(Asn/Gln) amidotransferase subunit B (500 aa).

It belongs to the GatB/GatE family. GatB subfamily. As to quaternary structure, heterotrimer of A, B and C subunits.

The catalysed reaction is L-glutamyl-tRNA(Gln) + L-glutamine + ATP + H2O = L-glutaminyl-tRNA(Gln) + L-glutamate + ADP + phosphate + H(+). It carries out the reaction L-aspartyl-tRNA(Asn) + L-glutamine + ATP + H2O = L-asparaginyl-tRNA(Asn) + L-glutamate + ADP + phosphate + 2 H(+). In terms of biological role, allows the formation of correctly charged Asn-tRNA(Asn) or Gln-tRNA(Gln) through the transamidation of misacylated Asp-tRNA(Asn) or Glu-tRNA(Gln) in organisms which lack either or both of asparaginyl-tRNA or glutaminyl-tRNA synthetases. The reaction takes place in the presence of glutamine and ATP through an activated phospho-Asp-tRNA(Asn) or phospho-Glu-tRNA(Gln). The polypeptide is Aspartyl/glutamyl-tRNA(Asn/Gln) amidotransferase subunit B (Rhizobium leguminosarum bv. trifolii (strain WSM2304)).